The sequence spans 143 residues: Transcriptional regulator MraZ (143 aa).

2 SpoVT-AbrB domains span residues 5 to 47 (EYQH…PQDE) and 76 to 119 (ATEC…SKER).

Belongs to the MraZ family. In terms of assembly, forms oligomers.

It localises to the cytoplasm. Its subcellular location is the nucleoid. This is Transcriptional regulator MraZ from Brevibacillus brevis (strain 47 / JCM 6285 / NBRC 100599).